A 300-amino-acid polypeptide reads, in one-letter code: Cation-efflux pump FieF (300 aa).

The helical transmembrane segment at 24–44 threads the bilayer; it reads LLIKIFAWWYTGSVSILAALV. Asp45 and Asp49 together coordinate Zn(2+). 2 consecutive transmembrane segments (helical) span residues 82-102 and 114-134; these read AALA…LTGI and AGVG…LVTF. 2 residues coordinate Zn(2+): His153 and Asp157. The next 2 helical transmembrane spans lie at 156-176 and 178-198; these read SDVM…YGWH and ADAL…LRMG.

This sequence belongs to the cation diffusion facilitator (CDF) transporter (TC 2.A.4) family. FieF subfamily. As to quaternary structure, homodimer.

It is found in the cell inner membrane. The enzyme catalyses Zn(2+)(in) + H(+)(out) = Zn(2+)(out) + H(+)(in). It catalyses the reaction Cd(2+)(in) + H(+)(out) = Cd(2+)(out) + H(+)(in). The catalysed reaction is Fe(2+)(in) + H(+)(out) = Fe(2+)(out) + H(+)(in). Its function is as follows. Divalent metal cation transporter which exports Zn(2+), Cd(2+) and possibly Fe(2+). May be involved in zinc and iron detoxification by efflux. The chain is Cation-efflux pump FieF from Klebsiella pneumoniae subsp. pneumoniae (strain ATCC 700721 / MGH 78578).